Consider the following 390-residue polypeptide: Flagellar P-ring protein (390 aa).

A signal peptide spans M1–A25.

Belongs to the FlgI family. In terms of assembly, the basal body constitutes a major portion of the flagellar organelle and consists of four rings (L,P,S, and M) mounted on a central rod.

The protein resides in the periplasm. It localises to the bacterial flagellum basal body. In terms of biological role, assembles around the rod to form the L-ring and probably protects the motor/basal body from shearing forces during rotation. The polypeptide is Flagellar P-ring protein (Syntrophus aciditrophicus (strain SB)).